Consider the following 347-residue polypeptide: MEEQLIPIQWKDDALVLLDQTLLPNEIVYESFKTAESVWDAIQVMKVRGAPAIGVSAAYGVYLGIKEFAESTEEGFMDEVRKVCTYLATSRPTAVNLFWALERMESVATDNIHLSISQLKNRLLEEAKEIHREDEEINRQIGEHALTLFHDGMGVLTHCNAGALATTKYGTATAPMYLAKEKGWDLKIYSDETRPRLQGSTLTALELQRAGIDVTVITDNMAAMVMSQGKIDAVIVGCDRVAANGDVANKIGTLGVSILAKYYNIPFYVAAPTPTIDLKTSTGKEIPIEERDASEVINRFGKYSAPKESKVYNPAFDVTPHENVTAIITEKGIVKAPFTENLKKLFQ.

Substrate contacts are provided by residues 48-50, arginine 91, and glutamine 198; that span reads RGA. Residue aspartate 239 is the Proton donor of the active site. 249–250 is a substrate binding site; it reads NK.

It belongs to the EIF-2B alpha/beta/delta subunits family. DrdI subfamily.

It catalyses the reaction 5-deoxy-alpha-D-ribose 1-phosphate = 5-deoxy-D-ribulose 1-phosphate. It functions in the pathway carbohydrate degradation. Catalyzes the isomerization of 5-deoxy-alpha-D-ribose 1-phosphate to 5-deoxy-D-ribulose 1-phosphate, as part of a 5-deoxyribose salvage pathway that recycles this toxic radical SAM enzyme by-product to mainstream metabolites. The chain is 5-deoxyribose 1-phosphate isomerase from Bacillus cereus (strain ATCC 14579 / DSM 31 / CCUG 7414 / JCM 2152 / NBRC 15305 / NCIMB 9373 / NCTC 2599 / NRRL B-3711).